A 375-amino-acid chain; its full sequence is tRNA-specific 2-thiouridylase MnmA (375 aa).

ATP contacts are provided by residues 9 to 16 (AMSGGVDS) and Leu-35. Residue Cys-105 is the Nucleophile of the active site. Cys-105 and Cys-201 are joined by a disulfide. ATP is bound at residue Gly-129. An interaction with tRNA region spans residues 151-153 (KNQ). Cys-201 (cysteine persulfide intermediate) is an active-site residue. The tract at residues 307–308 (RY) is interaction with tRNA.

Belongs to the MnmA/TRMU family.

The protein resides in the cytoplasm. The enzyme catalyses S-sulfanyl-L-cysteinyl-[protein] + uridine(34) in tRNA + AH2 + ATP = 2-thiouridine(34) in tRNA + L-cysteinyl-[protein] + A + AMP + diphosphate + H(+). Catalyzes the 2-thiolation of uridine at the wobble position (U34) of tRNA, leading to the formation of s(2)U34. The chain is tRNA-specific 2-thiouridylase MnmA from Leptospira interrogans serogroup Icterohaemorrhagiae serovar Lai (strain 56601).